The primary structure comprises 610 residues: Protein mono-ADP-ribosyltransferase PARP6 (610 aa).

The PARP catalytic domain maps to 374–600; it reads EMTQGSYLEI…QDPKIQKEIM (227 aa). D580 carries the post-translational modification ADP-ribosyl aspartic acid.

It belongs to the ARTD/PARP family. Auto-mono-ADP-ribosylated.

It carries out the reaction L-aspartyl-[protein] + NAD(+) = 4-O-(ADP-D-ribosyl)-L-aspartyl-[protein] + nicotinamide. The enzyme catalyses L-cysteinyl-[protein] + NAD(+) = S-(ADP-D-ribosyl)-L-cysteinyl-[protein] + nicotinamide + H(+). Mono-ADP-ribosyltransferase that mediates mono-ADP-ribosylation of target proteins. This is Protein mono-ADP-ribosyltransferase PARP6 from Pongo abelii (Sumatran orangutan).